The sequence spans 196 residues: Probable inactive nicotinamidase At3g16190 (196 aa).

It belongs to the isochorismatase family.

In terms of biological role, does not possess nicotinamidase activity in vitro. This Arabidopsis thaliana (Mouse-ear cress) protein is Probable inactive nicotinamidase At3g16190.